A 296-amino-acid polypeptide reads, in one-letter code: NAD kinase (296 aa).

Asp-72 (proton acceptor) is an active-site residue. NAD(+) is bound by residues 72-73, 146-147, Arg-157, Lys-174, Asp-176, 187-192, and Gln-247; these read DG, ND, and TAYALS.

Belongs to the NAD kinase family. The cofactor is a divalent metal cation.

The protein resides in the cytoplasm. It carries out the reaction NAD(+) + ATP = ADP + NADP(+) + H(+). In terms of biological role, involved in the regulation of the intracellular balance of NAD and NADP, and is a key enzyme in the biosynthesis of NADP. Catalyzes specifically the phosphorylation on 2'-hydroxyl of the adenosine moiety of NAD to yield NADP. The polypeptide is NAD kinase (Pseudomonas savastanoi pv. phaseolicola (strain 1448A / Race 6) (Pseudomonas syringae pv. phaseolicola (strain 1448A / Race 6))).